A 149-amino-acid chain; its full sequence is Protein FAM72A (149 aa).

It belongs to the FAM72 family. In terms of assembly, interacts with UNG. As to expression, may be up-regulated in malignant colon cancers, compared to normal colon and colon adenomas. Expression is also elevated in other common cancer types, including breast, lung, uterus, and ovary.

The protein resides in the cytoplasm. Its subcellular location is the mitochondrion. May play a role in the regulation of cellular reactive oxygen species metabolism. May participate in cell growth regulation. This is Protein FAM72A (FAM72A) from Homo sapiens (Human).